Consider the following 147-residue polypeptide: MFSVKWGELYFNVVMEGGKAVKSYFSTYPSFSSSDSEYARQLERYFSGERVEVRIPYRLKASSFTRRVLEEVSRIPYGMVRMYSDIAKALNTSPRAVGQAVKRNPLPVIIPCHRVVGKKEIGGYTVSCSDIDGKSLKKRLLRLEGVF.

The active-site Nucleophile; methyl group acceptor is the Cys-112.

Belongs to the MGMT family.

It is found in the cytoplasm. The enzyme catalyses a 6-O-methyl-2'-deoxyguanosine in DNA + L-cysteinyl-[protein] = S-methyl-L-cysteinyl-[protein] + a 2'-deoxyguanosine in DNA. It carries out the reaction a 4-O-methyl-thymidine in DNA + L-cysteinyl-[protein] = a thymidine in DNA + S-methyl-L-cysteinyl-[protein]. In terms of biological role, involved in the cellular defense against the biological effects of O6-methylguanine (O6-MeG) and O4-methylthymine (O4-MeT) in DNA. Repairs the methylated nucleobase in DNA by stoichiometrically transferring the methyl group to a cysteine residue in the enzyme. This is a suicide reaction: the enzyme is irreversibly inactivated. This is Methylated-DNA--protein-cysteine methyltransferase from Archaeoglobus fulgidus (strain ATCC 49558 / DSM 4304 / JCM 9628 / NBRC 100126 / VC-16).